We begin with the raw amino-acid sequence, 1130 residues long: MKWVKSGVGILGILLIICHAVTSQRRILDITDNLKITFKTISNFGPRAQSIQNVTIENVGIKDIPDFGWRCYFCHDQLLFPGTFNLARSQYFLRPILDNYVVLSDGFLLEFIKGCMYRITPIPRNAPIKTRDKREFTLLAEQFSVSKYDSFPNWYCETISGGNTEVANIRSTENLKYVEDFDSSYNWFRIPHDFRSVPLQPQDRYSANHKASSVEECKYKVIPTPVKASVRKVQRNFGTTVYYGTTDTSIRGKLFKVAEKLALKHKLGLVEMTPGQPVNNGISLVVTGNYIERNIPSPDEAYRLSVSADLISIEAPALPGLINGIETMHSLSAWDMALPYGGVKDFPRFPFRGIFLDIASNFPGYNYMMKFLTVMAQYKLNKLVLPLYNNEGFRLELNDSPGYEFQALHLVGGNRCHDLKEENCLFSQLGSFAGNSDGYLTKGDMVDLIKTADLLNIEIIMSLNIGESARGAIVPLKTSKHNRLLYDPEDTDFVDRFYPQKDSSMNPCREETMIFYDHMLKQLKAIYKAASVPLKTIMIGSKVNFDQVLNSKYCYPKNLNSTQRLMERENLERNINGFKLNFTKRLVKTAHDNGINEVMAIDDVFTTEFDAAGNTPNTVYDTVDSETNKTRFNATVTAVHSRYDTVRDERLWKRGDRFAELGYKVIISPPILDFNYAVEPDPDRPGDYDSVIRNISFSKLFRFVPDSHCCNIPNAIQHDCALESDCTTAGPPDSYIGTLGKLDTRKLRSLKDWNELLFPRLLIFAERSWHKSSWEDSFEPHRVRMNNITRQIITNYTVPNWNDIIQEESKVLGCISRKEKLRLMHEDGLKPYVEPPGARLLGGNTMRIAASTTEDSFWVQASVNGNPWTDNVKVLDVNPTDSVRLRTVHPAKAELRSKEVKLNLTSLPTPREQFRKIAQDALSRRIGIDIQRARMPPMPVNPTYRPPVPLPSFDPADDRAPDLAAIAAAHPPPLPPGMPPHMMPNMPFPPRPPFVPPLLPPGQMRALGQQAGQALRGQGQQTGQQTLPAQPRGPMGLTGQAAGTGVAGQSGQQPSAAGQGTQQGLPGQQRTGVVPGQWPFFPGMPAAQFPPMFNPQMQRALQMRGQGQIPQTQGAVAGAGQSRVPQQQAG.

An N-terminal signal peptide occupies residues 1 to 23 (MKWVKSGVGILGILLIICHAVTS). 2 stretches are compositionally biased toward low complexity: residues 1001 to 1030 (PGQMRALGQQAGQALRGQGQQTGQQTLPAQ) and 1037 to 1072 (LTGQAAGTGVAGQSGQQPSAAGQGTQQGLPGQQRTG). Disordered regions lie at residues 1001–1075 (PGQM…GVVP) and 1102–1130 (QMRGQGQIPQTQGAVAGAGQSRVPQQQAG).

It belongs to the glycosyl hydrolase 20 family. In terms of tissue distribution, prismatic layer of shell (at protein level). Expressed primarily in the mantle with highest level in the mantle edge and lower level in the mantle pallium.

The protein localises to the secreted. It carries out the reaction Hydrolysis of terminal non-reducing N-acetyl-D-hexosamine residues in N-acetyl-beta-D-hexosaminides.. Its pathway is glycan degradation; chitin degradation. This Pinctada maxima (Silver-lipped pearl oyster) protein is Putative beta-hexosaminidase.